A 1345-amino-acid chain; its full sequence is DNA-directed RNA polymerase subunit beta (1345 aa).

This sequence belongs to the RNA polymerase beta chain family. The RNAP catalytic core consists of 2 alpha, 1 beta, 1 beta' and 1 omega subunit. When a sigma factor is associated with the core the holoenzyme is formed, which can initiate transcription.

The enzyme catalyses RNA(n) + a ribonucleoside 5'-triphosphate = RNA(n+1) + diphosphate. Its function is as follows. DNA-dependent RNA polymerase catalyzes the transcription of DNA into RNA using the four ribonucleoside triphosphates as substrates. The chain is DNA-directed RNA polymerase subunit beta from Shewanella sp. (strain ANA-3).